We begin with the raw amino-acid sequence, 247 residues long: 4-hydroxy-tetrahydrodipicolinate reductase (247 aa).

NAD(+) contacts are provided by residues 9-14 (GAAGRM), 76-78 (GTT), and 103-106 (APNF). Histidine 133 serves as the catalytic Proton donor/acceptor. (S)-2,3,4,5-tetrahydrodipicolinate is bound at residue histidine 134. The active-site Proton donor is lysine 137. 143-144 (GT) contacts (S)-2,3,4,5-tetrahydrodipicolinate.

The protein belongs to the DapB family.

The protein localises to the cytoplasm. The catalysed reaction is (S)-2,3,4,5-tetrahydrodipicolinate + NAD(+) + H2O = (2S,4S)-4-hydroxy-2,3,4,5-tetrahydrodipicolinate + NADH + H(+). It catalyses the reaction (S)-2,3,4,5-tetrahydrodipicolinate + NADP(+) + H2O = (2S,4S)-4-hydroxy-2,3,4,5-tetrahydrodipicolinate + NADPH + H(+). The protein operates within amino-acid biosynthesis; L-lysine biosynthesis via DAP pathway; (S)-tetrahydrodipicolinate from L-aspartate: step 4/4. In terms of biological role, catalyzes the conversion of 4-hydroxy-tetrahydrodipicolinate (HTPA) to tetrahydrodipicolinate. The polypeptide is 4-hydroxy-tetrahydrodipicolinate reductase (Beutenbergia cavernae (strain ATCC BAA-8 / DSM 12333 / CCUG 43141 / JCM 11478 / NBRC 16432 / NCIMB 13614 / HKI 0122)).